The primary structure comprises 396 residues: Acetate kinase (396 aa).

Asn-7 is a binding site for Mg(2+). ATP is bound at residue Lys-14. Arg-91 serves as a coordination point for substrate. Asp-148 acts as the Proton donor/acceptor in catalysis. ATP contacts are provided by residues 208–212 (HLGNG), 283–285 (DFR), and 331–335 (GLGEN). Position 384 (Glu-384) interacts with Mg(2+).

Belongs to the acetokinase family. In terms of assembly, homodimer. Mg(2+) is required as a cofactor. The cofactor is Mn(2+).

It localises to the cytoplasm. The enzyme catalyses acetate + ATP = acetyl phosphate + ADP. It functions in the pathway metabolic intermediate biosynthesis; acetyl-CoA biosynthesis; acetyl-CoA from acetate: step 1/2. Its function is as follows. Catalyzes the formation of acetyl phosphate from acetate and ATP. Can also catalyze the reverse reaction. The protein is Acetate kinase of Alkaliphilus metalliredigens (strain QYMF).